The following is a 465-amino-acid chain: MIVTRFAPSPTGNLHIGGLRTALFSYLYARKTGGKFLLRIEDTDLARNSHDATKAIIEAFDWVGLSYDGEAIYQSERFPLYKEYIDRLIQEGKAYYCYMSKEELDALREEQRSRGETPRYDNRYRDFTGTPPSGVAPVVRIKAPLEGYIEFEDGVKGEMKIGAKEMDDYIIARSDGTPTYNFVVSIDDALMGVTDVIRGDDHLTNTPKQIIVYQALGFPIPKFYHVPMILNPEGRKLSKRDGAMGVMDYKRAGYLPEAVLNFLVRLGWSHGDQEIFSMEEMLRFFDPKDLNSSASAYNQEKFLWLNHHYITQTPNERLEELLLEFGCQPLSLGVREILYPALKERAKTLAELAQMLQEIVQTPSELDTKMLEKVGNSENGEILENYALFLESLESAGENPKILEEETQAFLDIHGLKSGKLFQSVRLALLGKGGGPGIFEIMAAIGKEESMARIQKASEIFKNRN.

Positions 8-18 match the 'HIGH' region motif; that stretch reads PSPTGNLHIGG. A 'KMSKS' region motif is present at residues 236 to 240; it reads KLSKR. An ATP-binding site is contributed by Lys-239.

This sequence belongs to the class-I aminoacyl-tRNA synthetase family. Glutamate--tRNA ligase type 1 subfamily. In terms of assembly, monomer.

Its subcellular location is the cytoplasm. The catalysed reaction is tRNA(Glu) + L-glutamate + ATP = L-glutamyl-tRNA(Glu) + AMP + diphosphate. In terms of biological role, catalyzes the attachment of glutamate to tRNA(Glu) in a two-step reaction: glutamate is first activated by ATP to form Glu-AMP and then transferred to the acceptor end of tRNA(Glu). The sequence is that of Glutamate--tRNA ligase 1 from Wolinella succinogenes (strain ATCC 29543 / DSM 1740 / CCUG 13145 / JCM 31913 / LMG 7466 / NCTC 11488 / FDC 602W) (Vibrio succinogenes).